Here is a 138-residue protein sequence, read N- to C-terminus: ATP synthase epsilon chain (138 aa).

Belongs to the ATPase epsilon chain family. In terms of assembly, F-type ATPases have 2 components, CF(1) - the catalytic core - and CF(0) - the membrane proton channel. CF(1) has five subunits: alpha(3), beta(3), gamma(1), delta(1), epsilon(1). CF(0) has three main subunits: a, b and c.

The protein resides in the cell membrane. Its function is as follows. Produces ATP from ADP in the presence of a proton gradient across the membrane. The protein is ATP synthase epsilon chain of Streptococcus pyogenes serotype M2 (strain MGAS10270).